A 335-amino-acid polypeptide reads, in one-letter code: MPIRHCIVHLIDKKPDGSPAVLHARDSELAASDAIENLLADLNDSYNAKQGKAWGFFHGESGAYPLSGWLKQYLEGEKDFTAFSRVAVEHLQKLMEESNLSTGGHILFAHYQQGMTEYLAIALLHHSEGVAVNAELDVTPSRHLDLGQLHLAARINLSEWKNNQNSKQYISFIKGKNGKKVSDYFRDFIGCQEGVDGPGETRTLLKAFSDFVESEDLPEESAREKTQTLVEYATTQTKLGEPVTLEELSSLIDEDRPKAFYDHIRNKDYGLSPEIPADKRTLNQFRRFTGRAEGLSISFEAHLLGDKVEYDEAAGTLIIKGLPTTLVDQLKRRKD.

It belongs to the YejK family.

It localises to the cytoplasm. It is found in the nucleoid. This Pseudomonas putida (strain ATCC 700007 / DSM 6899 / JCM 31910 / BCRC 17059 / LMG 24140 / F1) protein is Nucleoid-associated protein Pput_1012.